The chain runs to 492 residues: Beclin 1-associated autophagy-related key regulator (492 aa).

Serine 29 carries the post-translational modification Phosphoserine. Positions 70–180 (RDRERFIDKK…KLGDLVEKKT (111 aa)) form a coiled coil. Disordered regions lie at residues 213-232 (TSGRDPADVSSETDSAMTSS) and 411-473 (GVAG…AGGM). Residues 222-232 (SSETDSAMTSS) show a composition bias toward polar residues. At serine 416 the chain carries Phosphoserine. Residues 424-433 (VSDEETDLGT) are compositionally biased toward acidic residues. Position 429 is a phosphothreonine (threonine 429). A compositionally biased stretch (low complexity) spans 447-473 (PSQPVEVSQSQSTQASPPIASSSAGGM).

This sequence belongs to the ATG14 family. In terms of assembly, forms homooligomers; homo-oligomerization is essential for the roles in membrane tethering and enhancement of SNARE-mediated fusion. Component of the PI3K (PI3KC3/PI3K-III/class III phosphatidylinositol 3-kinase) complex I (PI3KC3-C1) in which the core composed of the catalytic subunit PIK3C3, the regulatory subunit PIK3R4 and BECN1 is associated with ATG14. PI3KC3-C1 displays a V-shaped architecture with PIK3R4 serving as a bridge between PIK3C3 and the ATG14:BECN1 subcomplex. PI3KC3-C1 can associate with further regulatory subunits. Interacts with PIK3CB. Interacts (via coiled-coil domain) with BECN2 (via coiled-coil domain); this interaction is tighter than BECN2 self-association. Interacts with the STX17-SNAP29 binary t-SNARE complex. Interacts with NRBF2. Interacts with PIK3C3 and BECN1; this interaction is increased in the absence of TMEM39A. Interacts with STEEP1; the interaction is required for trafficking of STING1 from the endoplasmic reticulum. Interacts with ARMC3 (via ARM domains). Post-translationally, ubiquitinated via 'Lys-6', 'Lys-11' and 'Lys-63'-linked polyubiquitin chains on multiple lysines by MARCHF7, leading to ATG14 aggregation and loss of interaction with STX17.

Its subcellular location is the cytoplasm. It is found in the endoplasmic reticulum membrane. The protein localises to the preautophagosomal structure membrane. In terms of biological role, required for both basal and inducible autophagy. Determines the localization of the autophagy-specific PI3-kinase complex. Plays a role in autophagosome formation and MAP1LC3/LC3 conjugation to phosphatidylethanolamine. Promotes BECN1 translocation from the trans-Golgi network to autophagosomes. Enhances PIK3C3 activity in a BECN1-dependent manner. Essential for the autophagy-dependent phosphorylation of BECN1. Stimulates the phosphorylation of BECN1, but suppresses the phosphorylation PIK3C3 by AMPK. Binds to STX17-SNAP29 binary t-SNARE complex on autophagosomes and primes it for VAMP8 interaction to promote autophagosome-endolysosome fusion. Modulates the hepatic lipid metabolism. In Rattus norvegicus (Rat), this protein is Beclin 1-associated autophagy-related key regulator.